Here is a 415-residue protein sequence, read N- to C-terminus: Lipoyl synthase, apicoplast (415 aa).

The N-terminal stretch at 1 to 23 (MHFGIPSLFYLYILFSIIMRIKC) is a signal peptide. Positions 153, 158, 164, 179, 183, 186, and 394 each coordinate [4Fe-4S] cluster. The Radical SAM core domain occupies 165–383 (WNIGTATIML…KEEGLKMGFK (219 aa)).

This sequence belongs to the radical SAM superfamily. Lipoyl synthase family. It depends on [4Fe-4S] cluster as a cofactor.

The protein resides in the plastid. Its subcellular location is the apicoplast. It carries out the reaction [[Fe-S] cluster scaffold protein carrying a second [4Fe-4S](2+) cluster] + N(6)-octanoyl-L-lysyl-[protein] + 2 oxidized [2Fe-2S]-[ferredoxin] + 2 S-adenosyl-L-methionine + 4 H(+) = [[Fe-S] cluster scaffold protein] + N(6)-[(R)-dihydrolipoyl]-L-lysyl-[protein] + 4 Fe(3+) + 2 hydrogen sulfide + 2 5'-deoxyadenosine + 2 L-methionine + 2 reduced [2Fe-2S]-[ferredoxin]. The protein operates within protein modification; protein lipoylation via endogenous pathway; protein N(6)-(lipoyl)lysine from octanoyl-[acyl-carrier-protein]: step 2/2. Catalyzes the radical-mediated insertion of two sulfur atoms into the C-6 and C-8 positions of the octanoyl moiety bound to the lipoyl domains of lipoate-dependent enzymes, thereby converting the octanoylated domains into lipoylated derivatives. This chain is Lipoyl synthase, apicoplast, found in Plasmodium falciparum (isolate 3D7).